A 270-amino-acid polypeptide reads, in one-letter code: Ribosomal RNA small subunit methyltransferase A (270 aa).

Positions 18, 20, 45, 66, 91, and 112 each coordinate S-adenosyl-L-methionine.

Belongs to the class I-like SAM-binding methyltransferase superfamily. rRNA adenine N(6)-methyltransferase family. RsmA subfamily.

It is found in the cytoplasm. It catalyses the reaction adenosine(1518)/adenosine(1519) in 16S rRNA + 4 S-adenosyl-L-methionine = N(6)-dimethyladenosine(1518)/N(6)-dimethyladenosine(1519) in 16S rRNA + 4 S-adenosyl-L-homocysteine + 4 H(+). Specifically dimethylates two adjacent adenosines (A1518 and A1519) in the loop of a conserved hairpin near the 3'-end of 16S rRNA in the 30S particle. May play a critical role in biogenesis of 30S subunits. In Shewanella piezotolerans (strain WP3 / JCM 13877), this protein is Ribosomal RNA small subunit methyltransferase A.